The primary structure comprises 303 residues: UPF0282 protein PAE3680 (303 aa).

Belongs to the UPF0282 family.

This Pyrobaculum aerophilum (strain ATCC 51768 / DSM 7523 / JCM 9630 / CIP 104966 / NBRC 100827 / IM2) protein is UPF0282 protein PAE3680.